A 572-amino-acid chain; its full sequence is Oxygen-dependent choline dehydrogenase (572 aa).

9–38 contributes to the FAD binding site; it reads DYVIIGGGSAGSVLGARLSEDKDKNVLVLE. Catalysis depends on histidine 477, which acts as the Proton acceptor.

This sequence belongs to the GMC oxidoreductase family. Requires FAD as cofactor.

It catalyses the reaction choline + A = betaine aldehyde + AH2. It carries out the reaction betaine aldehyde + NAD(+) + H2O = glycine betaine + NADH + 2 H(+). It participates in amine and polyamine biosynthesis; betaine biosynthesis via choline pathway; betaine aldehyde from choline (cytochrome c reductase route): step 1/1. In terms of biological role, involved in the biosynthesis of the osmoprotectant glycine betaine. Catalyzes the oxidation of choline to betaine aldehyde and betaine aldehyde to glycine betaine at the same rate. This chain is Oxygen-dependent choline dehydrogenase, found in Staphylococcus epidermidis (strain ATCC 12228 / FDA PCI 1200).